Here is a 241-residue protein sequence, read N- to C-terminus: Fatty acid metabolism regulator protein (241 aa).

The HTH gntR-type domain occupies 11-79 (QSPAALAEEY…HGKPTKVNNI (69 aa)). A DNA-binding region (H-T-H motif) is located at residues 39–58 (ERDLADKIGVTRTTLREVLQ).

Homodimer.

The protein localises to the cytoplasm. In terms of biological role, multifunctional regulator of fatty acid metabolism. The sequence is that of Fatty acid metabolism regulator protein from Haemophilus influenzae (strain ATCC 51907 / DSM 11121 / KW20 / Rd).